Reading from the N-terminus, the 286-residue chain is tRNA (guanine-N(7)-)-methyltransferase (286 aa).

Phosphoserine is present on residues Ser-7 and Ser-59. S-adenosyl-L-methionine is bound by residues Gly-103, 126 to 127 (EI), 161 to 162 (NA), and Cys-181. Asp-184 is an active-site residue. 259–261 (TEE) is a binding site for S-adenosyl-L-methionine.

Belongs to the class I-like SAM-binding methyltransferase superfamily. TrmB family. In terms of assembly, forms a complex with TRM82.

It localises to the nucleus. The catalysed reaction is guanosine(46) in tRNA + S-adenosyl-L-methionine = N(7)-methylguanosine(46) in tRNA + S-adenosyl-L-homocysteine. Its pathway is tRNA modification; N(7)-methylguanine-tRNA biosynthesis. Its function is as follows. Methyltransferase that catalyzes the formation of N(7)-methylguanine at position 46 (m7G46) in tRNA, a modification required to maintain stability of tRNAs; its absence resulting in tRNA decay. Both the D-stem and T-stem structures of tRNAs are required for efficient methyltransferase activity. The chain is tRNA (guanine-N(7)-)-methyltransferase from Saccharomyces cerevisiae (strain RM11-1a) (Baker's yeast).